A 144-amino-acid polypeptide reads, in one-letter code: Maximins 5/H4 type 3 (144 aa).

The N-terminal stretch at 1 to 18 (MNFKYIVAVSFLIASAYA) is a signal peptide. 2 propeptides span residues 19–43 (RSVQ…REIR) and 74–123 (TAED…KEKR). Position 143 is a leucine amide (Leu143).

This sequence belongs to the bombinin family. In terms of tissue distribution, expressed by the skin glands.

Its subcellular location is the secreted. Functionally, maximin-5 shows antibacterial activity against both Gram-positive and Gram-negative bacteria. The only exception is the resistance of E.coli. Also shows antimicrobial activity against fungi C.albicans, A.flavus and P.uticale. It has little hemolytic activity. It does not possess a significant cytotoxicity against tumor cell lines. It does not possess a significant anti-HIV activity. Maximin-H4 shows antibacterial activity against both Gram-positive and Gram-negative bacteria. It also shows antimicrobial activity against the fungus C.albicans. Shows strong hemolytic activity. The protein is Maximins 5/H4 type 3 of Bombina maxima (Giant fire-bellied toad).